Reading from the N-terminus, the 179-residue chain is Replication restart protein DnaT (179 aa).

The interval 156 to 179 is disordered; it reads GGLPKRDVNTVSEPDSQIPPGFRG.

Belongs to the DnaT family. Homooligomerizes. Interacts with PriB. Component of the replication restart primosome. Primosome assembly occurs via a 'hand-off' mechanism. PriA binds to replication forks, subsequently PriB then DnaT bind; DnaT then displaces ssDNA to generate the helicase loading substrate.

Involved in the restart of stalled replication forks, which reloads the replicative helicase on sites other than the origin of replication. Can function in multiple replication restart pathways. Displaces ssDNA from a PriB-ssDNA complex. Probably forms a spiral filament on ssDNA. This Escherichia coli O7:K1 (strain IAI39 / ExPEC) protein is Replication restart protein DnaT.